A 413-amino-acid polypeptide reads, in one-letter code: Cardiolipin synthase B (413 aa).

2 PLD phosphodiesterase domains span residues 108–135 and 285–312; these read VFRRMHRKIVVIDARIAFIGGLNYSAEH and RRRPLHGKVALMDDHWATVGSSNLDPLS. Catalysis depends on residues His113, Lys115, Asp120, His290, Lys292, and Asp297. Residues 390–413 form a disordered region; it reads VDPPAQPTMETQDRVETENTGVKP.

This sequence belongs to the phospholipase D family. Cardiolipin synthase subfamily. ClsB sub-subfamily.

It is found in the cell membrane. The enzyme catalyses 2 a 1,2-diacyl-sn-glycero-3-phospho-(1'-sn-glycerol) = a cardiolipin + glycerol. Functionally, catalyzes the phosphatidyl group transfer from one phosphatidylglycerol molecule to another to form cardiolipin (CL) (diphosphatidylglycerol) and glycerol. The sequence is that of Cardiolipin synthase B from Escherichia coli O157:H7.